A 216-amino-acid polypeptide reads, in one-letter code: NADH dehydrogenase [ubiquinone] iron-sulfur protein 7, mitochondrial (216 aa).

Residues 1-37 constitute a mitochondrion transit peptide; it reads MAALAALRLLHPILAVRSGVGAALQVRGVHSSMAADS. [4Fe-4S] cluster is bound by residues Cys-91 and Cys-92. Arg-114 carries the hydroxyarginine modification. Residues Cys-156 and Cys-186 each coordinate [4Fe-4S] cluster.

It belongs to the complex I 20 kDa subunit family. As to quaternary structure, core subunit of respiratory chain NADH dehydrogenase (Complex I) which is composed of 45 different subunits. This is a component of the iron-sulfur (IP) fragment of the enzyme. The cofactor is [4Fe-4S] cluster. Hydroxylated ar Arg-114 by NDUFAF5 early in the pathway of assembly of complex I, before the formation of the juncture between peripheral and membrane arms.

The protein localises to the mitochondrion inner membrane. It catalyses the reaction a ubiquinone + NADH + 5 H(+)(in) = a ubiquinol + NAD(+) + 4 H(+)(out). In terms of biological role, core subunit of the mitochondrial membrane respiratory chain NADH dehydrogenase (Complex I) which catalyzes electron transfer from NADH through the respiratory chain, using ubiquinone as an electron acceptor. Essential for the catalytic activity of complex I. The protein is NADH dehydrogenase [ubiquinone] iron-sulfur protein 7, mitochondrial (NDUFS7) of Bos taurus (Bovine).